The following is a 250-amino-acid chain: uncharacterized protein (250 aa).

The signal sequence occupies residues 1 to 19 (MAKPRNAAESKAAKAQANA). The next 2 membrane-spanning stretches (helical) occupy residues 51-71 (IGAF…AGGF) and 73-93 (MFTM…VIFG). The disordered stretch occupies residues 226–250 (AGVMPKGPLPTTAKMRSVQRTVRRK).

It is found in the cell membrane. This is an uncharacterized protein from Mycobacterium tuberculosis (strain CDC 1551 / Oshkosh).